The primary structure comprises 131 residues: Single-stranded DNA-binding protein 2 (131 aa).

The 103-residue stretch at 1-103 folds into the SSB domain; the sequence is MYNKVIMIGR…VLASSFQLLE (103 aa). The Important for interaction with partner proteins signature appears at 126 to 131; the sequence is EEELPF.

Homotetramer.

Plays an important role in DNA replication, recombination and repair. Binds to ssDNA and to an array of partner proteins to recruit them to their sites of action during DNA metabolism. This is Single-stranded DNA-binding protein 2 (ssb2) from Streptococcus agalactiae serotype III (strain NEM316).